We begin with the raw amino-acid sequence, 156 residues long: Ribonuclease pancreatic (156 aa).

Residues 1-28 (MALEKSLALLPLLVLVLLVLGWVQPSLG) form the signal peptide. A compositionally biased stretch (basic and acidic residues) spans 33-43 (AKKFQRQHMDS). The interval 33–52 (AKKFQRQHMDSDGSPSSNPT) is disordered. Substrate is bound by residues Lys35 and Arg38. His40 (proton acceptor) is an active-site residue. 4 disulfide bridges follow: Cys54–Cys112, Cys68–Cys123, Cys86–Cys138, and Cys93–Cys100. N-linked (GlcNAc...) asparagine glycosylation is present at Asn62. Substrate contacts are provided by residues 69-73 (KPVNT), Lys94, and Arg113. Residue Asn116 is glycosylated (N-linked (GlcNAc...) asparagine). His147 acts as the Proton donor in catalysis.

Belongs to the pancreatic ribonuclease family. Monomer. Interacts with and forms tight 1:1 complexes with RNH1. Dimerization of two such complexes may occur. Interaction with RNH1 inhibits this protein.

It is found in the secreted. It catalyses the reaction an [RNA] containing cytidine + H2O = an [RNA]-3'-cytidine-3'-phosphate + a 5'-hydroxy-ribonucleotide-3'-[RNA].. The catalysed reaction is an [RNA] containing uridine + H2O = an [RNA]-3'-uridine-3'-phosphate + a 5'-hydroxy-ribonucleotide-3'-[RNA].. Its function is as follows. Endonuclease that catalyzes the cleavage of RNA on the 3' side of pyrimidine nucleotides. Acts on single-stranded and double-stranded RNA. This chain is Ribonuclease pancreatic (RNASE1), found in Saimiri sciureus (Common squirrel monkey).